The chain runs to 294 residues: 33 kDa chaperonin (294 aa).

Intrachain disulfides connect Cys-239-Cys-241 and Cys-272-Cys-275.

This sequence belongs to the HSP33 family. Post-translationally, under oxidizing conditions two disulfide bonds are formed involving the reactive cysteines. Under reducing conditions zinc is bound to the reactive cysteines and the protein is inactive.

It is found in the cytoplasm. In terms of biological role, redox regulated molecular chaperone. Protects both thermally unfolding and oxidatively damaged proteins from irreversible aggregation. Plays an important role in the bacterial defense system toward oxidative stress. The sequence is that of 33 kDa chaperonin from Listeria monocytogenes serotype 4a (strain HCC23).